We begin with the raw amino-acid sequence, 283 residues long: Thymidylate synthase (283 aa).

Arg-22 is a binding site for dUMP. The Nucleophile role is filled by Cys-160. DUMP-binding positions include 180–183 (RSCD), Asn-191, and 221–223 (HIY). Asp-183 is a (6R)-5,10-methylene-5,6,7,8-tetrahydrofolate binding site. Ser-282 is a (6R)-5,10-methylene-5,6,7,8-tetrahydrofolate binding site.

The protein belongs to the thymidylate synthase family. Bacterial-type ThyA subfamily. Homodimer.

The protein resides in the cytoplasm. The enzyme catalyses dUMP + (6R)-5,10-methylene-5,6,7,8-tetrahydrofolate = 7,8-dihydrofolate + dTMP. The protein operates within pyrimidine metabolism; dTTP biosynthesis. Its function is as follows. Catalyzes the reductive methylation of 2'-deoxyuridine-5'-monophosphate (dUMP) to 2'-deoxythymidine-5'-monophosphate (dTMP) while utilizing 5,10-methylenetetrahydrofolate (mTHF) as the methyl donor and reductant in the reaction, yielding dihydrofolate (DHF) as a by-product. This enzymatic reaction provides an intracellular de novo source of dTMP, an essential precursor for DNA biosynthesis. The polypeptide is Thymidylate synthase (Histophilus somni (strain 129Pt) (Haemophilus somnus)).